The following is a 185-amino-acid chain: Ribosome-recycling factor (185 aa).

It belongs to the RRF family.

The protein localises to the cytoplasm. Its function is as follows. Responsible for the release of ribosomes from messenger RNA at the termination of protein biosynthesis. May increase the efficiency of translation by recycling ribosomes from one round of translation to another. The sequence is that of Ribosome-recycling factor from Hamiltonella defensa subsp. Acyrthosiphon pisum (strain 5AT).